Reading from the N-terminus, the 267-residue chain is MMQRCWRLPVPLGKRGLAVVTHTRQAVVSDNPEAENLDGFEQQYLKERIEITTFQRMLLGAGSSIAAILDPRRHDMIACLGETTGEDALWNIMDTMHESEEGQRIMVEKPRIHTSTIDFKRLESLPADTFGAAYVKFLKDNKVTPDSRMAVRFLEDPKLAYLMTRYRECHDLIHTVLDMPTNMLGEVAVKWVEALNTGLPMCYGGAVFGAVRLRPKQRRAYLKHYLPWALENGKQMKPLMPVYWEERWEQNVNELRAELGIKLLNKF.

Residues His-170, Asp-171, His-174, and Glu-186 each coordinate Zn(2+).

Belongs to the COQ4 family. As to quaternary structure, component of a multi-subunit COQ enzyme complex. The cofactor is Zn(2+).

It localises to the mitochondrion inner membrane. The catalysed reaction is a 4-hydroxy-3-methoxy-5-(all-trans-polyprenyl)benzoate + H(+) = a 2-methoxy-6-(all-trans-polyprenyl)phenol + CO2. It functions in the pathway cofactor biosynthesis; ubiquinone biosynthesis. Functionally, lyase that catalyzes the C1-decarboxylation of 4-hydroxy-3-methoxy-5-(all-trans-polyprenyl)benzoic acid into 2-methoxy-6-(all-trans-polyprenyl)phenol during ubiquinone biosynthesis. The protein is Ubiquinone biosynthesis protein COQ4 homolog, mitochondrial of Drosophila pseudoobscura pseudoobscura (Fruit fly).